Consider the following 250-residue polypeptide: Petrobactin import ATP-binding protein FatE (250 aa).

Residues 2–236 (IKIDNVKKFY…TLLTDIFETR (235 aa)) enclose the ABC transporter domain. An ATP-binding site is contributed by 34–41 (GPNGAGKS).

It belongs to the ABC transporter superfamily. In terms of assembly, the complex is composed of two ATP-binding proteins (FatE), two transmembrane proteins (FatC and FatD) and a solute-binding protein (FpuA).

The protein localises to the cell membrane. The enzyme catalyses a Fe(III)-siderophore(out) + ATP + H2O = a Fe(III)-siderophore(in) + ADP + phosphate + H(+). Its function is as follows. Part of an ABC transporter complex involved in ferric-petrobactin uptake. Probably responsible for energy coupling to the transport system. The sequence is that of Petrobactin import ATP-binding protein FatE from Bacillus anthracis.